A 286-amino-acid polypeptide reads, in one-letter code: Light-independent protochlorophyllide reductase iron-sulfur ATP-binding protein (286 aa).

ATP-binding positions include 10-15 (GIGKST) and Lys39. Ser14 contributes to the Mg(2+) binding site. Positions 95 and 129 each coordinate [4Fe-4S] cluster. Position 180–181 (180–181 (NR)) interacts with ATP.

The protein belongs to the NifH/BchL/ChlL family. Homodimer. Protochlorophyllide reductase is composed of three subunits; ChlL, ChlN and ChlB. It depends on [4Fe-4S] cluster as a cofactor.

It carries out the reaction chlorophyllide a + oxidized 2[4Fe-4S]-[ferredoxin] + 2 ADP + 2 phosphate = protochlorophyllide a + reduced 2[4Fe-4S]-[ferredoxin] + 2 ATP + 2 H2O. Its pathway is porphyrin-containing compound metabolism; chlorophyll biosynthesis (light-independent). Functionally, component of the dark-operative protochlorophyllide reductase (DPOR) that uses Mg-ATP and reduced ferredoxin to reduce ring D of protochlorophyllide (Pchlide) to form chlorophyllide a (Chlide). This reaction is light-independent. The L component serves as a unique electron donor to the NB-component of the complex, and binds Mg-ATP. The chain is Light-independent protochlorophyllide reductase iron-sulfur ATP-binding protein from Leptolyngbya boryana (Plectonema boryanum).